The following is a 227-amino-acid chain: MITKTGTTIVGMKYKTGVILAADTRSTQGPVVSDKNCVKIHQITDKIMCCGAGTAADASRVARMASRELRLFQNKYLRLPLVSHFRKVCTQHLHKYGGGIGAALIVGGIDSEGCHLYEIHPHGSENSALFVSLGSGSLGAIATLESRYRAMDKDEAIDLACDAVKAGILNDLYSGSNIDVCVIDYSGVEFLRNYRRIGVSENTDTLVYPLDSVRIKREEVFDIVEEY.

Positions 1–6 (MITKTG) are cleaved as a propeptide — removed in mature form. Residue threonine 7 is the Nucleophile of the active site.

This sequence belongs to the peptidase T1B family. The 26S proteasome consists of a 20S proteasome core and two 19S regulatory subunits. The 20S proteasome core is composed of 28 subunits that are arranged in four stacked rings, resulting in a barrel-shaped structure. The two end rings are each formed by seven alpha subunits, and the two central rings are each formed by seven beta subunits. The catalytic chamber with the active sites is on the inside of the barrel.

The protein localises to the cytoplasm. Its subcellular location is the nucleus. It carries out the reaction Cleavage of peptide bonds with very broad specificity.. In terms of biological role, the proteasome degrades poly-ubiquitinated proteins in the cytoplasm and in the nucleus. It is essential for the regulated turnover of proteins and for the removal of misfolded proteins. The proteasome is a multicatalytic proteinase complex that is characterized by its ability to cleave peptides with Arg, Phe, Tyr, Leu, and Glu adjacent to the leaving group at neutral or slightly basic pH. It has an ATP-dependent proteolytic activity. The chain is Probable proteasome subunit beta type-2 (PUP1) from Encephalitozoon cuniculi (strain GB-M1) (Microsporidian parasite).